The following is a 257-amino-acid chain: Diaminopimelate epimerase (257 aa).

Residues N13, Q46, and N66 each coordinate substrate. C75 serves as the catalytic Proton donor. Residues 76 to 77 (GN), N145, N175, and 193 to 194 (ER) contribute to the substrate site. Catalysis depends on C202, which acts as the Proton acceptor. Substrate is bound at residue 203-204 (GS).

It belongs to the diaminopimelate epimerase family. Homodimer.

The protein resides in the cytoplasm. It catalyses the reaction (2S,6S)-2,6-diaminopimelate = meso-2,6-diaminopimelate. The protein operates within amino-acid biosynthesis; L-lysine biosynthesis via DAP pathway; DL-2,6-diaminopimelate from LL-2,6-diaminopimelate: step 1/1. Functionally, catalyzes the stereoinversion of LL-2,6-diaminopimelate (L,L-DAP) to meso-diaminopimelate (meso-DAP), a precursor of L-lysine and an essential component of the bacterial peptidoglycan. This chain is Diaminopimelate epimerase, found in Gluconobacter oxydans (strain 621H) (Gluconobacter suboxydans).